The following is a 350-amino-acid chain: MTTTTVTSTPLAEKTVLAPKAELHIHIEGSLEPELIFALAERNGVKLAYDSIDALRAAYAFTDLQSFLDIYYAGASVLLHEQDFYDMTMAYVERCLADNVVHSEIFFDPQTHTERGVPIATVVAGIERALADAEQRGMSSKLILCFLRHLSEEDALATFEEARPLFEQYRHRLIGVGLDSSERGHPPSKFERVFAKARSLGLKLVAHAGEEGPPSYIYEALDLLKVDRVDHGVRSIEDPALVTRLADSRVALTVCPLSNLKLCVFDDLTKHTLKDLLDRGVAVTVNSDDPAYFGGYVNANYLATIDALKLNDAEVYTIIRNSFEASFVTPGQRSELIAKLDAHWHPGGPH.

Positions 24, 26, and 207 each coordinate Zn(2+). Glutamate 210 (proton donor) is an active-site residue. Residue aspartate 288 coordinates Zn(2+). Residue aspartate 289 coordinates substrate.

The protein belongs to the metallo-dependent hydrolases superfamily. Adenosine and AMP deaminases family. Adenine deaminase type 2 subfamily. The cofactor is Zn(2+).

The catalysed reaction is adenine + H2O + H(+) = hypoxanthine + NH4(+). Functionally, catalyzes the hydrolytic deamination of adenine to hypoxanthine. Plays an important role in the purine salvage pathway and in nitrogen catabolism. The sequence is that of Adenine deaminase from Paraburkholderia xenovorans (strain LB400).